A 468-amino-acid chain; its full sequence is 6-phospho-beta-galactosidase (468 aa).

Residues Gln19, His116, Asn159, Glu160, and Asn297 each contribute to the D-galactose 6-phosphate site. Glu160 serves as the catalytic Proton donor. Glu375 serves as the catalytic Nucleophile. The D-galactose 6-phosphate site is built by Ser428, Trp429, Lys435, and Tyr437.

The protein belongs to the glycosyl hydrolase 1 family.

The catalysed reaction is a 6-phospho-beta-D-galactoside + H2O = D-galactose 6-phosphate + an alcohol. The protein operates within carbohydrate metabolism; lactose degradation; D-galactose 6-phosphate and beta-D-glucose from lactose 6-phosphate: step 1/1. The protein is 6-phospho-beta-galactosidase of Streptococcus pneumoniae (strain JJA).